Consider the following 469-residue polypeptide: Protein HEAT STRESS TOLERANT DWD 1 (469 aa).

Basic residues predominate over residues 1–15 (MGRNVKTKAKRKNKK). Disordered stretches follow at residues 1–29 (MGRN…SIPT) and 115–150 (DVVP…KTPN). Residues 124–143 (GEDEDEDDEDDSDSDDDDGD) show a composition bias toward acidic residues. WD repeat units lie at residues 157-197 (AHHG…NALA), 221-261 (GHKD…WAVD), 267-307 (GHTA…SPAL), 311-351 (AHNA…GGDA), 358-398 (YHKH…DEEE), and 425-464 (QGQK…NTLP).

The protein belongs to the WD repeat RBAP46/RBAP48/MSI1 family. Probable component of CULLIN4 (CUL4) RING ligase (CRL4) complexes. Interacts with DDB1A and DDB1B. Associates with HSP90-1.

The protein operates within protein modification; protein ubiquitination. In terms of biological role, probable substrate receptor of CRL4 E3 ligase complexes acting as negative regulators of thermotolerance by disturbing the action of HSP90-1 and by preventing the expression of heat-inducible genes (e.g. HSP14.7, HSP21, At2g03020 and WRKY28). The chain is Protein HEAT STRESS TOLERANT DWD 1 from Arabidopsis thaliana (Mouse-ear cress).